We begin with the raw amino-acid sequence, 429 residues long: Ribosomal RNA small subunit methyltransferase B (429 aa).

Residues C254–K260, D277, D303, and D322 contribute to the S-adenosyl-L-methionine site. Catalysis depends on C375, which acts as the Nucleophile.

Belongs to the class I-like SAM-binding methyltransferase superfamily. RsmB/NOP family.

It is found in the cytoplasm. It carries out the reaction cytidine(967) in 16S rRNA + S-adenosyl-L-methionine = 5-methylcytidine(967) in 16S rRNA + S-adenosyl-L-homocysteine + H(+). Functionally, specifically methylates the cytosine at position 967 (m5C967) of 16S rRNA. This chain is Ribosomal RNA small subunit methyltransferase B, found in Escherichia coli O17:K52:H18 (strain UMN026 / ExPEC).